Consider the following 255-residue polypeptide: MALPDFTMRQLLEAGVHFGHQTHRWNPKMKPYIFGDRNNVHIIDLAQTVPMLSRALQVVSDTVASGGRVLFVGTKRQASEIIADAAKRSAQYYVNARWLGGMMTNWKTISNSIQRLRKLDEILASEASGFTKKERLNLEREREKLNRALGGIRDMGGTPDLMFIIDTNKESIAIDEAKRLGIPVVAVIDSNCDPDQIDYAIPGNDDASRAIALYCDLIARAAIDGIARQQGASGRDLGASEEVPVEPALEEASEA.

The interval 232 to 255 (ASGRDLGASEEVPVEPALEEASEA) is disordered.

This sequence belongs to the universal ribosomal protein uS2 family.

This is Small ribosomal subunit protein uS2 from Rhizobium meliloti (strain 1021) (Ensifer meliloti).